Here is a 263-residue protein sequence, read N- to C-terminus: Small ribosomal subunit protein uS2 (263 aa).

Basic and acidic residues predominate over residues 223–249; sequence KALREQDGEALANEEKEITDEEKKEVL. The disordered stretch occupies residues 223–263; the sequence is KALREQDGEALANEEKEITDEEKKEVLDEAMSEEDFGEEQE. A compositionally biased stretch (acidic residues) spans 250-263; that stretch reads DEAMSEEDFGEEQE.

It belongs to the universal ribosomal protein uS2 family.

This chain is Small ribosomal subunit protein uS2, found in Campylobacter jejuni subsp. jejuni serotype O:6 (strain 81116 / NCTC 11828).